A 439-amino-acid chain; its full sequence is GTPase Der (439 aa).

EngA-type G domains are found at residues 2-168 (ATVL…EEKG) and 181-357 (IKVA…ASYT). Residues 8-15 (GKPNVGKS), 55-59 (DTCGV), 118-121 (NKTE), 187-194 (GRPNVGKS), 234-238 (DTAGL), and 300-303 (NKWD) each bind GTP. Positions 358–439 (TKVPSSAINS…PIFLKFKRSR (82 aa)) constitute a KH-like domain.

The protein belongs to the TRAFAC class TrmE-Era-EngA-EngB-Septin-like GTPase superfamily. EngA (Der) GTPase family. In terms of assembly, associates with the 50S ribosomal subunit.

In terms of biological role, GTPase that plays an essential role in the late steps of ribosome biogenesis. In Thermotoga petrophila (strain ATCC BAA-488 / DSM 13995 / JCM 10881 / RKU-1), this protein is GTPase Der.